The following is a 339-amino-acid chain: N-acetyl-gamma-glutamyl-phosphate reductase 1 (339 aa).

Residue Cys-149 is part of the active site.

Belongs to the NAGSA dehydrogenase family. Type 1 subfamily.

Its subcellular location is the cytoplasm. It carries out the reaction N-acetyl-L-glutamate 5-semialdehyde + phosphate + NADP(+) = N-acetyl-L-glutamyl 5-phosphate + NADPH + H(+). It functions in the pathway amino-acid biosynthesis; L-arginine biosynthesis; N(2)-acetyl-L-ornithine from L-glutamate: step 3/4. Catalyzes the NADPH-dependent reduction of N-acetyl-5-glutamyl phosphate to yield N-acetyl-L-glutamate 5-semialdehyde. The sequence is that of N-acetyl-gamma-glutamyl-phosphate reductase 1 from Lactiplantibacillus plantarum (strain ATCC BAA-793 / NCIMB 8826 / WCFS1) (Lactobacillus plantarum).